The following is a 328-amino-acid chain: DNA repair protein RAD51 homolog 4 (328 aa).

The tract at residues 1–83 is preferentially binds ssDNA; it reads MGVLRVGLCP…ELKTSTAILS (83 aa). 107–114 serves as a coordination point for ATP; that stretch reads GGPGSGKT.

Belongs to the RecA family. RAD51 subfamily. As to quaternary structure, part of the BCDX2 complex consisting of RAD51B, RAD51C, RAD51D and XRCC2; the complex has a ring-like structure arranged into a flat disc around a central channel. In the absence of DNA, the BCDX2 subcomplex XRCC2:RAD51D formed a multimeric ring structure; in the presence of single-stranded DNA it formed a filamentous structure with the ssDNA. Interacts with SWSAP1 and ZSWIM7; involved in homologous recombination repair. Interacts with BLM; required for stimulation of BLM activity by the BCDX2 subcomplex XRCC2:RAD51D. Expressed in colon, prostate, spleen, testis, ovary, thymus and small intestine. Weakly expressed in leukocytes.

The protein localises to the nucleus. It is found in the cytoplasm. The protein resides in the cytoskeleton. It localises to the microtubule organizing center. Its subcellular location is the centrosome. The protein localises to the chromosome. It is found in the telomere. Involved in the homologous recombination repair (HRR) pathway of double-stranded DNA breaks arising during DNA replication or induced by DNA-damaging agents. Bind to single-stranded DNA (ssDNA) and has DNA-dependent ATPase activity. Part of the RAD51 paralog protein complex BCDX2 which acts in the BRCA1-BRCA2-dependent HR pathway. Upon DNA damage, BCDX2 acts downstream of BRCA2 recruitment and upstream of RAD51 recruitment. BCDX2 binds predominantly to the intersection of the four duplex arms of the Holliday junction and to junction of replication forks. The BCDX2 complex was originally reported to bind single-stranded DNA, single-stranded gaps in duplex DNA and specifically to nicks in duplex DNA. Involved in telomere maintenance. The BCDX2 subcomplex XRCC2:RAD51D can stimulate Holliday junction resolution by BLM. The chain is DNA repair protein RAD51 homolog 4 (RAD51D) from Homo sapiens (Human).